Reading from the N-terminus, the 644-residue chain is Serine/threonine kinase YeaG (644 aa).

It belongs to the PrkA family. In terms of assembly, monomer.

It is found in the cytoplasm. The enzyme catalyses L-seryl-[protein] + ATP = O-phospho-L-seryl-[protein] + ADP + H(+). It carries out the reaction L-threonyl-[protein] + ATP = O-phospho-L-threonyl-[protein] + ADP + H(+). Kinase that plays a role in the adaptation to sustained nitrogen starvation. The chain is Serine/threonine kinase YeaG (yeaG) from Escherichia coli O157:H7.